Here is a 339-residue protein sequence, read N- to C-terminus: Phenylalanine--tRNA ligase alpha subunit (339 aa).

Glu254 is a binding site for Mg(2+).

It belongs to the class-II aminoacyl-tRNA synthetase family. Phe-tRNA synthetase alpha subunit type 1 subfamily. As to quaternary structure, tetramer of two alpha and two beta subunits. Mg(2+) is required as a cofactor.

The protein resides in the cytoplasm. The enzyme catalyses tRNA(Phe) + L-phenylalanine + ATP = L-phenylalanyl-tRNA(Phe) + AMP + diphosphate + H(+). This is Phenylalanine--tRNA ligase alpha subunit from Desulforudis audaxviator (strain MP104C).